The chain runs to 305 residues: Homoserine O-acetyltransferase (305 aa).

The active-site Acyl-thioester intermediate is the C142. Substrate is bound by residues K163 and S192. H235 serves as the catalytic Proton acceptor. E237 is an active-site residue. R249 contacts substrate.

It belongs to the MetA family.

It localises to the cytoplasm. It catalyses the reaction L-homoserine + acetyl-CoA = O-acetyl-L-homoserine + CoA. Its pathway is amino-acid biosynthesis; L-methionine biosynthesis via de novo pathway; O-acetyl-L-homoserine from L-homoserine: step 1/1. In terms of biological role, transfers an acetyl group from acetyl-CoA to L-homoserine, forming acetyl-L-homoserine. This is Homoserine O-acetyltransferase from Dinoroseobacter shibae (strain DSM 16493 / NCIMB 14021 / DFL 12).